A 384-amino-acid chain; its full sequence is Glucose-fructose oxidoreductase domain-containing protein 2 (384 aa).

The N-terminal stretch at 1–25 (MKTLPGIGVFGTGNTARVLISLLRA) is a signal peptide. The disordered stretch occupies residues 358–384 (GEWESVELTNDETDSNQNLSEVIQHNL). Residues 372–384 (SNQNLSEVIQHNL) are compositionally biased toward polar residues.

It belongs to the Gfo/Idh/MocA family.

The protein resides in the secreted. Its subcellular location is the extracellular space. It is found in the extracellular matrix. Functionally, promotes matrix assembly. The chain is Glucose-fructose oxidoreductase domain-containing protein 2 (gfod2) from Xenopus tropicalis (Western clawed frog).